The chain runs to 163 residues: Nucleotide-binding protein Tery_2743 (163 aa).

This sequence belongs to the YajQ family.

Nucleotide-binding protein. This chain is Nucleotide-binding protein Tery_2743, found in Trichodesmium erythraeum (strain IMS101).